The sequence spans 356 residues: MKKIVLVAGGTGGHFFPAVALGEELIKRKYEVHFITDLRCEKYINHDAGLIFHVIDLKRPKNILLFLPLLSLAIFKAIKLLFSLSPSAVVGFGGYPVVASMFAAIFLRVPIVIHEQNSYLGKVNRFFANFAKKIAISYKNTKNLPVVVKNRTVVTGGIVRKNIRGLDSVVKRRNDKDRTFKIFIFGGSQGAKLFSELIPESIKALMQKQPNLKLHITQQAALDDQVKIKNIYSNLNINYELAEFFDNMANQYKNTDLVISRAGASTIEELTYIGLPAIFIPLPSAADNHQYHNAKLLEDEKCGWCMKQDDISSEKLAEKIFELISNPKILENTSKNLLKRRKEGHKLLSNLIEELI.

Residues Thr11–Gly13, Asn117, Arg160, Ser188, and Gln290 contribute to the UDP-N-acetyl-alpha-D-glucosamine site.

This sequence belongs to the glycosyltransferase 28 family. MurG subfamily.

It is found in the cell inner membrane. It catalyses the reaction di-trans,octa-cis-undecaprenyl diphospho-N-acetyl-alpha-D-muramoyl-L-alanyl-D-glutamyl-meso-2,6-diaminopimeloyl-D-alanyl-D-alanine + UDP-N-acetyl-alpha-D-glucosamine = di-trans,octa-cis-undecaprenyl diphospho-[N-acetyl-alpha-D-glucosaminyl-(1-&gt;4)]-N-acetyl-alpha-D-muramoyl-L-alanyl-D-glutamyl-meso-2,6-diaminopimeloyl-D-alanyl-D-alanine + UDP + H(+). It participates in cell wall biogenesis; peptidoglycan biosynthesis. Cell wall formation. Catalyzes the transfer of a GlcNAc subunit on undecaprenyl-pyrophosphoryl-MurNAc-pentapeptide (lipid intermediate I) to form undecaprenyl-pyrophosphoryl-MurNAc-(pentapeptide)GlcNAc (lipid intermediate II). This is UDP-N-acetylglucosamine--N-acetylmuramyl-(pentapeptide) pyrophosphoryl-undecaprenol N-acetylglucosamine transferase from Rickettsia bellii (strain RML369-C).